A 502-amino-acid chain; its full sequence is Nucleoside transporter 2 (502 aa).

At 1–30 (MTTSSDSAMVNHTPSPWYKFGFKSFAEFNT) the chain is on the cytoplasmic side. A helical membrane pass occupies residues 31–51 (YVTFVFLGMSIMMVASAVTSA). Residues 52-81 (PDFLTRYYVYATGDPDAVAETPLFWNNANT) lie on the Extracellular side of the membrane. The helical transmembrane segment at 82–102 (FYNAGTYVLQVLTELFSLTPF) threads the bilayer. The Cytoplasmic portion of the chain corresponds to 103-111 (MRRIPLSVR). The chain crosses the membrane as a helical span at residues 112-132 (LFVGLGIPFAELLLIIIVPAA). At 133 to 137 (TIKSQ) the chain is on the extracellular side. A helical transmembrane segment spans residues 138 to 158 (HGAIAVIMVVACVGGFSKALC). The Cytoplasmic segment spans residues 159 to 178 (DSCTNALVGPFPTKFMNGAQ). The chain crosses the membrane as a helical span at residues 179–199 (WGLTVIALLMSIIQIILKVSM). Residues 200–210 (GTSFHDILTMS) lie on the Extracellular side of the membrane. The helical transmembrane segment at 211–231 (RIYFGICIGIQLFAIFELAIL) threads the bilayer. Residues 232 to 352 (RFNPFAQKYI…SVFKRVYPML (121 aa)) are Cytoplasmic-facing. The tract at residues 252–273 (AQNNESTLEETAPSMNEPAAGD) is disordered. The helical transmembrane segment at 353-373 (VCVFLIYFTSLLTFPGVFFLV) threads the bilayer. Residues 374-380 (STTSGWY) lie on the Extracellular side of the membrane. The chain crosses the membrane as a helical span at residues 381–401 (MTVIVTLFNAGDFISRMVLMF). Residues 402–408 (RPLRPSP) lie on the Cytoplasmic side of the membrane. Residues 409–429 (KVVVAGTLGRLIIIPFLVLCV) traverse the membrane as a helical segment. Over 430 to 436 (RGIIRGE) the chain is Extracellular. The chain crosses the membrane as a helical span at residues 437-457 (ALPYVLITLLGLTNGYFGCMA). Residues 458 to 477 (CIHCPRTTTLRYAGERSLAA) are Cytoplasmic-facing. Residues 478 to 498 (MLSGISIMLGLCFGSNLSLAI) traverse the membrane as a helical segment. Over 499–502 (TLTH) the chain is Extracellular.

The protein belongs to the SLC29A/ENT transporter (TC 2.A.57) family.

Its subcellular location is the cell membrane. It carries out the reaction inosine(in) = inosine(out). It catalyses the reaction guanosine(in) = guanosine(out). High affinity transporter for inosine and guanosine. This chain is Nucleoside transporter 2, found in Crithidia fasciculata.